A 416-amino-acid polypeptide reads, in one-letter code: Lipoyl synthase, mitochondrial (416 aa).

The N-terminal 33 residues, 1–33 (MAAASTNRLRLLYTSTRASLPQSTPSILTTRTY), are a transit peptide targeting the mitochondrion. The disordered stretch occupies residues 20-52 (LPQSTPSILTTRTYATTDSSTSATSTPKPRRRT). Residues 29–46 (TTRTYATTDSSTSATSTP) are compositionally biased toward low complexity. The [4Fe-4S] cluster site is built by Cys133, Cys138, Cys144, Cys164, Cys168, Cys171, and Ser379. One can recognise a Radical SAM core domain in the interval 147–368 (GGDKAAATAT…QRRAEELGFL (222 aa)).

This sequence belongs to the radical SAM superfamily. Lipoyl synthase family. Requires [4Fe-4S] cluster as cofactor.

It is found in the mitochondrion. It carries out the reaction [[Fe-S] cluster scaffold protein carrying a second [4Fe-4S](2+) cluster] + N(6)-octanoyl-L-lysyl-[protein] + 2 oxidized [2Fe-2S]-[ferredoxin] + 2 S-adenosyl-L-methionine + 4 H(+) = [[Fe-S] cluster scaffold protein] + N(6)-[(R)-dihydrolipoyl]-L-lysyl-[protein] + 4 Fe(3+) + 2 hydrogen sulfide + 2 5'-deoxyadenosine + 2 L-methionine + 2 reduced [2Fe-2S]-[ferredoxin]. Its pathway is protein modification; protein lipoylation via endogenous pathway; protein N(6)-(lipoyl)lysine from octanoyl-[acyl-carrier-protein]: step 2/2. Its function is as follows. Catalyzes the radical-mediated insertion of two sulfur atoms into the C-6 and C-8 positions of the octanoyl moiety bound to the lipoyl domains of lipoate-dependent enzymes, thereby converting the octanoylated domains into lipoylated derivatives. In Aspergillus niger (strain ATCC MYA-4892 / CBS 513.88 / FGSC A1513), this protein is Lipoyl synthase, mitochondrial.